The primary structure comprises 456 residues: Outer membrane efflux protein BepC (456 aa).

The N-terminal stretch at 1–28 is a signal peptide; it reads MRYTVFKACKELVAAAVLLSGTVLTGQA. A coiled-coil region spans residues 312–341; it reads RTSAQIRQSKEQLGQARIEVDVVQDKVRQA.

The protein belongs to the outer membrane factor (OMF) (TC 1.B.17) family. Probably part of a tripartite efflux pump, which is composed of an outer membrane efflux protein, an inner membrane protein and a protein that expands the periplasmic space. Could form a tripartite pump with BepD and BepE or with BepF and BepG.

It localises to the cell outer membrane. Its function is as follows. Involved in the efflux of toxic and relatively hydrophobic compounds. Influences survival inside the host. This Brucella suis biovar 1 (strain 1330) protein is Outer membrane efflux protein BepC (bepC).